Reading from the N-terminus, the 211-residue chain is ATP phosphoribosyltransferase (211 aa).

This sequence belongs to the ATP phosphoribosyltransferase family. Short subfamily. In terms of assembly, heteromultimer composed of HisG and HisZ subunits.

Its subcellular location is the cytoplasm. The catalysed reaction is 1-(5-phospho-beta-D-ribosyl)-ATP + diphosphate = 5-phospho-alpha-D-ribose 1-diphosphate + ATP. It participates in amino-acid biosynthesis; L-histidine biosynthesis; L-histidine from 5-phospho-alpha-D-ribose 1-diphosphate: step 1/9. In terms of biological role, catalyzes the condensation of ATP and 5-phosphoribose 1-diphosphate to form N'-(5'-phosphoribosyl)-ATP (PR-ATP). Has a crucial role in the pathway because the rate of histidine biosynthesis seems to be controlled primarily by regulation of HisG enzymatic activity. In Lacticaseibacillus casei (strain BL23) (Lactobacillus casei), this protein is ATP phosphoribosyltransferase.